A 549-amino-acid polypeptide reads, in one-letter code: RNA-induced transcriptional silencing complex protein tas3 (549 aa).

Disordered regions lie at residues 89–111, 126–184, 202–225, 298–361, and 381–430; these read KNSP…VRAS, DGKE…SDSI, IRSS…SSKS, LDNF…HLEK, and AHFH…PLAS. A compositionally biased stretch (polar residues) spans 298-307; that stretch reads LDNFNRPSQQ. Basic and acidic residues-rich tracts occupy residues 328 to 361 and 403 to 416; these read YDSY…HLEK and SDRQ…ELPT. The span at 419 to 430 shows a compositional bias: polar residues; sequence LNASDSHNPLAS.

As to quaternary structure, ago1, chp1 and tas3 interact to form the core of the RNA-induced transcriptional silencing (RITS) complex. The RITS complex interacts with the RDRC complex via interaction between ago1 and hrr1. Clr4 has a role in mediating this interaction.

Its subcellular location is the nucleus. The protein localises to the cytoplasm. It localises to the cytoskeleton. It is found in the microtubule organizing center. The protein resides in the spindle pole body. Has a role in the RNA interference (RNAi) pathway which is important for heterochromatin formation and accurate chromosome segregation. A member of the RNA-induced transcriptional silencing (RITS) complex which is involved in the biosynthesis of dsRNA from primer siRNAs provided by the RNA-directed RNA polymerase (RDRC) complex. This chain is RNA-induced transcriptional silencing complex protein tas3 (tas3), found in Schizosaccharomyces pombe (strain 972 / ATCC 24843) (Fission yeast).